The primary structure comprises 195 residues: Protein SYM1 (195 aa).

4 consecutive transmembrane segments (helical) span residues 17–39 (LITN…QFFF), 59–78 (RAII…WYKF), 99–121 (STLL…PLYY), and 168–190 (PVQF…LSYV).

It belongs to the peroxisomal membrane protein PXMP2/4 family.

The protein localises to the mitochondrion inner membrane. In terms of biological role, may be involved in cellular response to stress. Required to maintain mitochondrial DNA (mtDNA) integrity and stability. The sequence is that of Protein SYM1 (SYM1) from Candida albicans (strain SC5314 / ATCC MYA-2876) (Yeast).